Consider the following 463-residue polypeptide: Glycine--tRNA ligase (463 aa).

Substrate-binding residues include Arg-100 and Glu-175. Residues 207–209 (RNE), 217–222 (FRTREF), 291–292 (EL), and 335–338 (GADR) contribute to the ATP site. 222–226 (FEQME) lines the substrate pocket. Position 331-335 (331-335 (EPSLG)) interacts with substrate.

The protein belongs to the class-II aminoacyl-tRNA synthetase family. Homodimer.

The protein resides in the cytoplasm. The enzyme catalyses tRNA(Gly) + glycine + ATP = glycyl-tRNA(Gly) + AMP + diphosphate. In terms of biological role, catalyzes the attachment of glycine to tRNA(Gly). The sequence is that of Glycine--tRNA ligase from Clostridium tetani (strain Massachusetts / E88).